The following is a 78-amino-acid chain: Delta-conotoxin-like TxMKLT1-0111 (78 aa).

A signal peptide spans 1-22 (MKLTCMMIVAVLFLTAWTFATA). Positions 23–49 (DDSGNGLENLFSNAHHQMKNPEASKLN) are excised as a propeptide. 3 cysteine pairs are disulfide-bonded: Cys53–Cys68, Cys60–Cys72, and Cys67–Cys77.

Belongs to the conotoxin O1 superfamily. Expressed by the venom duct.

Its subcellular location is the secreted. In terms of biological role, delta-conotoxins bind to site 6 of voltage-gated sodium channels (Nav) and inhibit the inactivation process. This is Delta-conotoxin-like TxMKLT1-0111 from Conus textile (Cloth-of-gold cone).